Here is a 280-residue protein sequence, read N- to C-terminus: DegV domain-containing protein Mb2440c (280 aa).

A DegV domain is found at valine 3–valine 274. Serine 89 provides a ligand contact to hexadecanoate.

Functionally, may bind long-chain fatty acids, such as palmitate, and may play a role in lipid transport or fatty acid metabolism. The polypeptide is DegV domain-containing protein Mb2440c (Mycobacterium bovis (strain ATCC BAA-935 / AF2122/97)).